We begin with the raw amino-acid sequence, 434 residues long: Chaperone SurA (434 aa).

The N-terminal stretch at 1–20 (MKNWRTLILGLVICANTAFA) is a signal peptide. PpiC domains are found at residues 171 to 272 (DTEL…KVND) and 282 to 382 (VTEV…QLVD).

Its subcellular location is the periplasm. The catalysed reaction is [protein]-peptidylproline (omega=180) = [protein]-peptidylproline (omega=0). Its function is as follows. Chaperone involved in the correct folding and assembly of outer membrane proteins. Recognizes specific patterns of aromatic residues and the orientation of their side chains, which are found more frequently in integral outer membrane proteins. May act in both early periplasmic and late outer membrane-associated steps of protein maturation. The sequence is that of Chaperone SurA from Yersinia pestis bv. Antiqua (strain Nepal516).